Here is a 132-residue protein sequence, read N- to C-terminus: Small ribosomal subunit protein uS8 (132 aa).

It belongs to the universal ribosomal protein uS8 family. Part of the 30S ribosomal subunit. Contacts proteins S5 and S12.

In terms of biological role, one of the primary rRNA binding proteins, it binds directly to 16S rRNA central domain where it helps coordinate assembly of the platform of the 30S subunit. The polypeptide is Small ribosomal subunit protein uS8 (Mycobacterium marinum (strain ATCC BAA-535 / M)).